Here is a 338-residue protein sequence, read N- to C-terminus: Fructose-1,6-bisphosphatase class 1 (338 aa).

Mg(2+)-binding residues include Glu-91, Asp-113, Leu-115, and Asp-116. Substrate-binding positions include 116–119 (DGSS), Asn-208, and Lys-274. Glu-280 is a binding site for Mg(2+).

It belongs to the FBPase class 1 family. As to quaternary structure, homotetramer. Mg(2+) is required as a cofactor.

It localises to the cytoplasm. The enzyme catalyses beta-D-fructose 1,6-bisphosphate + H2O = beta-D-fructose 6-phosphate + phosphate. It functions in the pathway carbohydrate biosynthesis; gluconeogenesis. In Ralstonia nicotianae (strain ATCC BAA-1114 / GMI1000) (Ralstonia solanacearum), this protein is Fructose-1,6-bisphosphatase class 1.